A 184-amino-acid polypeptide reads, in one-letter code: Tumor necrosis factor alpha-induced protein 8-like protein 2 (184 aa).

At Ser3 the chain carries Phosphoserine.

The protein belongs to the TNFAIP8 family. TNFAIP8L2 subfamily. In terms of assembly, may interact with CASP8; however, such result is unclear since could not reproduce the interaction with CASP8. Interacts with RAC1. Post-translationally, phosphorylated by TAK1/MAP3K7; this phosphorylation triggers association with BTRC and subsequent ubiquitination and degradation. Ubiquitinated in a BTRC-depdent manner; leading to degradation mediated through the proteasome pathway.

The protein localises to the cytoplasm. Its subcellular location is the nucleus. It localises to the lysosome. Functionally, acts as a negative regulator of innate and adaptive immunity by maintaining immune homeostasis. Plays a regulatory role in the Toll-like signaling pathway by determining the strength of LPS-induced signaling and gene expression. Inhibits TCR-mediated T-cell activation and negatively regulate T-cell function to prevent hyperresponsiveness. Also inhibits autolysosome formation via negatively modulating MTOR activation by interacting with RAC1 and promoting the disassociation of the RAC1-MTOR complex. Plays an essential role in NK-cell biology by acting as a checkpoint and displaying an expression pattern correlating with NK-cell maturation process and by negatively regulating NK-cell maturation and antitumor immunity. Mechanistically, suppresses IL-15-triggered mTOR activity in NK-cells. The sequence is that of Tumor necrosis factor alpha-induced protein 8-like protein 2 (Tnfaip8l2) from Rattus norvegicus (Rat).